Here is a 235-residue protein sequence, read N- to C-terminus: Bypass of stop codon protein 2 (235 aa).

Residues 68–88 (FGIFQLMCSLGVIVLLLPIII) form a helical membrane-spanning segment. At S177 the chain carries Phosphoserine.

It is found in the lipid droplet. It localises to the membrane. This Saccharomyces cerevisiae (strain ATCC 204508 / S288c) (Baker's yeast) protein is Bypass of stop codon protein 2 (BSC2).